A 171-amino-acid chain; its full sequence is 3-hydroxydecanoyl-[acyl-carrier-protein] dehydratase (171 aa).

His70 is a catalytic residue.

Belongs to the thioester dehydratase family. FabA subfamily. As to quaternary structure, homodimer.

It is found in the cytoplasm. The enzyme catalyses a (3R)-hydroxyacyl-[ACP] = a (2E)-enoyl-[ACP] + H2O. It catalyses the reaction (3R)-hydroxydecanoyl-[ACP] = (2E)-decenoyl-[ACP] + H2O. It carries out the reaction (2E)-decenoyl-[ACP] = (3Z)-decenoyl-[ACP]. Its pathway is lipid metabolism; fatty acid biosynthesis. Its function is as follows. Necessary for the introduction of cis unsaturation into fatty acids. Catalyzes the dehydration of (3R)-3-hydroxydecanoyl-ACP to E-(2)-decenoyl-ACP and then its isomerization to Z-(3)-decenoyl-ACP. Can catalyze the dehydratase reaction for beta-hydroxyacyl-ACPs with saturated chain lengths up to 16:0, being most active on intermediate chain length. The sequence is that of 3-hydroxydecanoyl-[acyl-carrier-protein] dehydratase from Vibrio campbellii (strain ATCC BAA-1116).